The following is a 567-amino-acid chain: Protein phosphatase 1 regulatory inhibitor subunit 16B (567 aa).

A coiled-coil region spans residues E15 to R55. Residue S69 is modified to Phosphoserine. ANK repeat units follow at residues D100–A129, E133–A162, Q228–V257, and D261–A290. S333, S337, and S350 each carry phosphoserine. Residues R378–E403 form a disordered region. A compositionally biased stretch (basic and acidic residues) spans D385–E403. A Phosphoserine modification is found at S476. A compositionally biased stretch (polar residues) spans S504–E515. Positions S504–T525 are disordered. An ANK 5 repeat occupies S530–K559. C563 carries S-palmitoyl cysteine lipidation. At C564 the chain carries Cysteine methyl ester. C564 carries the S-farnesyl cysteine lipid modification. Positions R565–S567 are cleaved as a propeptide — removed in mature form.

In terms of assembly, interacts with PPP1CA, PPP1CB and MSN. Interacts (via its fourth ankyrin repeat) with the mature dimeric form of RPSA/LAMR1. Interacts with EEF1A1. Interacts with PTEN. Interacts with ECE1. Phosphorylated by PKA and, after PKA priming, by GSK3B. Phosphorylation by GSK3B reduces its association with PP1C and enhances PP1C activity. Dephosphorylation by its associated PP1C results in enhanced association with PP1C, but reduced PP1C activity.

It is found in the cell membrane. The protein localises to the nucleus. It localises to the cell projection. Functionally, regulator of protein phosphatase 1 (PP1) that acts as a positive regulator of pulmonary endothelial cell (EC) barrier function. Involved in the regulation of the PI3K/AKT signaling pathway, angiogenesis and endothelial cell proliferation. Regulates angiogenesis and endothelial cell proliferation through the control of ECE1 dephosphorylation, trafficking and activity. Protects the endothelial barrier from lipopolysaccharide (LPS)-induced vascular leakage. Involved in the regulation of endothelial cell filopodia extension. May be a downstream target for TGF-beta1 signaling cascade in endothelial cells. Involved in PKA-mediated moesin dephosphorylation which is important in EC barrier protection against thrombin stimulation. Promotes the interaction of PPP1CA with RPSA/LAMR1 and in turn facilitates the dephosphorylation of RPSA/LAMR1. Involved in the dephosphorylation of EEF1A1. The polypeptide is Protein phosphatase 1 regulatory inhibitor subunit 16B (PPP1R16B) (Homo sapiens (Human)).